A 160-amino-acid chain; its full sequence is Transcription elongation factor GreA (160 aa).

The stretch at 1–72 forms a coiled coil; it reads MAEKTYPMTQ…QIQILETKIR (72 aa).

The protein belongs to the GreA/GreB family.

In terms of biological role, necessary for efficient RNA polymerase transcription elongation past template-encoded arresting sites. The arresting sites in DNA have the property of trapping a certain fraction of elongating RNA polymerases that pass through, resulting in locked ternary complexes. Cleavage of the nascent transcript by cleavage factors such as GreA or GreB allows the resumption of elongation from the new 3'terminus. GreA releases sequences of 2 to 3 nucleotides. This is Transcription elongation factor GreA from Streptococcus agalactiae serotype Ia (strain ATCC 27591 / A909 / CDC SS700).